The following is a 142-amino-acid chain: Large ribosomal subunit protein uL16 (142 aa).

The protein belongs to the universal ribosomal protein uL16 family. As to quaternary structure, part of the 50S ribosomal subunit.

Functionally, binds 23S rRNA and is also seen to make contacts with the A and possibly P site tRNAs. In Fervidobacterium nodosum (strain ATCC 35602 / DSM 5306 / Rt17-B1), this protein is Large ribosomal subunit protein uL16.